A 425-amino-acid polypeptide reads, in one-letter code: 3-deoxy-D-manno-octulosonic acid transferase (425 aa).

Residues 3-23 (ELLYTALLYLIQPLIWIRLWV) traverse the membrane as a helical; Signal-anchor segment. Residue Glu60 is the Proton acceptor of the active site. Residues 268–269 (PR), 309–311 (MGE), and 335–338 (NPLE) each bind CMP.

Belongs to the glycosyltransferase group 1 family. Glycosyltransferase 30 subfamily.

It localises to the cell inner membrane. The enzyme catalyses lipid IVA (E. coli) + CMP-3-deoxy-beta-D-manno-octulosonate = alpha-Kdo-(2-&gt;6)-lipid IVA (E. coli) + CMP + H(+). It catalyses the reaction alpha-Kdo-(2-&gt;6)-lipid IVA (E. coli) + CMP-3-deoxy-beta-D-manno-octulosonate = alpha-Kdo-(2-&gt;4)-alpha-Kdo-(2-&gt;6)-lipid IVA (E. coli) + CMP + H(+). The protein operates within glycolipid biosynthesis; KDO(2)-lipid A biosynthesis; KDO(2)-lipid A from CMP-3-deoxy-D-manno-octulosonate and lipid IV(A): step 1/4. It participates in glycolipid biosynthesis; KDO(2)-lipid A biosynthesis; KDO(2)-lipid A from CMP-3-deoxy-D-manno-octulosonate and lipid IV(A): step 2/4. Its pathway is bacterial outer membrane biogenesis; LPS core biosynthesis. Involved in lipopolysaccharide (LPS) biosynthesis. Catalyzes the transfer of two 3-deoxy-D-manno-octulosonate (Kdo) residues from CMP-Kdo to lipid IV(A), the tetraacyldisaccharide-1,4'-bisphosphate precursor of lipid A. This is 3-deoxy-D-manno-octulosonic acid transferase (waaA) from Escherichia coli O157:H7.